We begin with the raw amino-acid sequence, 227 residues long: Transmembrane emp24 domain-containing protein 1 (227 aa).

An N-terminal signal peptide occupies residues 1–23 (MMAAGTALGLALWLLLPPVGVGG). Topologically, residues 24–194 (AGPPPIQDGE…LQEGNLERVN (171 aa)) are extracellular. One can recognise a GOLD domain in the interval 43–125 (KQCFYQSAPA…EKLVFFELIF (83 aa)). Positions 145–170 (EILEVKMEDIKESIETMRIRLERSIQ) form a coiled coil. Residues 195–215 (FWSAVNVAVLLLVAVLQVCTL) traverse the membrane as a helical segment. The Cytoplasmic portion of the chain corresponds to 216–227 (KRFFQDKRPVPM). A COPII vesicle coat-binding motif is present at residues 218–219 (FF). The COPI vesicle coat-binding signature appears at 218-227 (FFQDKRPVPM).

It belongs to the EMP24/GP25L family. As to quaternary structure, homodimer in endoplasmic reticulum, endoplasmic reticulum-Golgi intermediate compartment and cis-Golgi network. Interacts with IL1RL1. Interacts with RNF26; this interaction is important to modulate innate immune signaling through the cGAS-STING pathway.

The protein localises to the cell membrane. The protein resides in the endoplasmic reticulum membrane. Its subcellular location is the golgi apparatus. It is found in the cis-Golgi network membrane. It localises to the endoplasmic reticulum-Golgi intermediate compartment membrane. Potential role in vesicular protein trafficking, mainly in the early secretory pathway. May act as a cargo receptor at the lumenal side for incorporation of secretory cargo molecules into transport vesicles and may be involved in vesicle coat formation at the cytoplasmic side. Plays a positive role in IL-33-mediated IL-8 and IL-6 production by interacting with interleukin-33 receptor IL1RL1. Plays also a role in the modulation of innate immune signaling through the cGAS-STING pathway by interacting with RNF26. The protein is Transmembrane emp24 domain-containing protein 1 (TMED1) of Bos taurus (Bovine).